The primary structure comprises 285 residues: NAD kinase (285 aa).

The active-site Proton acceptor is Asp67. NAD(+) is bound by residues 67-68 (DG), 141-142 (ND), Arg152, Lys169, Asp171, 182-187 (TGYSLS), and Gln242.

The protein belongs to the NAD kinase family. The cofactor is a divalent metal cation.

The protein localises to the cytoplasm. The catalysed reaction is NAD(+) + ATP = ADP + NADP(+) + H(+). Its function is as follows. Involved in the regulation of the intracellular balance of NAD and NADP, and is a key enzyme in the biosynthesis of NADP. Catalyzes specifically the phosphorylation on 2'-hydroxyl of the adenosine moiety of NAD to yield NADP. The polypeptide is NAD kinase (Trichlorobacter lovleyi (strain ATCC BAA-1151 / DSM 17278 / SZ) (Geobacter lovleyi)).